Consider the following 97-residue polypeptide: YcgL domain-containing protein PSPPH_1548 (97 aa).

In terms of domain architecture, YcgL spans 3-87; it reads RICSIYRSPK…AEDDYIEHLP (85 aa).

This is YcgL domain-containing protein PSPPH_1548 from Pseudomonas savastanoi pv. phaseolicola (strain 1448A / Race 6) (Pseudomonas syringae pv. phaseolicola (strain 1448A / Race 6)).